The following is a 301-amino-acid chain: uncharacterized protein (301 aa).

Glutamate 146, glutamate 148, and aspartate 177 together coordinate a divalent metal cation.

The protein belongs to the FAH family.

This is an uncharacterized protein from Staphylococcus haemolyticus (strain JCSC1435).